The sequence spans 53 residues: 20 kDa chaperonin (53 aa).

Cpn-10 domain stretches follow at residues 1-10 (YTSIKPLGDR) and 11-53 (VAEA…KITP).

The protein belongs to the GroES chaperonin family. Forms stable complexes with cpn60 in the presence of ATP. Homotetramer.

The protein localises to the plastid. It localises to the chloroplast. Seems to function only as a co-chaperone, along with cpn60, and in certain cases is essential for the discharge of biologically active proteins from cpn60. The polypeptide is 20 kDa chaperonin (Populus euphratica (Euphrates poplar)).